Here is a 576-residue protein sequence, read N- to C-terminus: Glucoamylase ARB_02327-1 (576 aa).

The first 20 residues, 1 to 20, serve as a signal peptide directing secretion; it reads MGLASTVSLALLGLCSLARA. Residue Trp141 coordinates substrate. Asn168 and Asn192 each carry an N-linked (GlcNAc...) asparagine glycan. Asp197 acts as the Proton acceptor in catalysis. Residue Glu200 is the Proton donor of the active site. Intrachain disulfides connect Cys243–Cys470 and Cys285–Cys293. Residues 477–576 form the CBM20 domain; sequence GSGGDTVAVT…GSFTQNDTWR (100 aa). A disordered region spans residues 552–576; sequence TWESDPNRSITTSASGSFTQNDTWR. 2 N-linked (GlcNAc...) asparagine glycosylation sites follow: Asn558 and Asn572.

This sequence belongs to the glycosyl hydrolase 15 family.

The protein localises to the secreted. It catalyses the reaction Hydrolysis of terminal (1-&gt;4)-linked alpha-D-glucose residues successively from non-reducing ends of the chains with release of beta-D-glucose.. In Schizophyllum commune (strain H4-8 / FGSC 9210) (Split gill fungus), this protein is Glucoamylase ARB_02327-1.